The primary structure comprises 157 residues: MNYEIRQVDKRTVAGFHLVGPWEQTVKQGFEQLMKWVEGRQIVTDEWIAVYFDNPDVVPAEKLRCSTVVSVPADFVVPANSEGVSLSEIDGGQYATAVARVTDNDFSTPWYQFFNSLAQDNKYEMACKPCFEVYLNDGCTEGYWDIEMYIAVQPLSR.

This sequence belongs to the DNA gyrase inhibitor family. In terms of assembly, interacts with DNA gyrase.

The protein resides in the cytoplasm. Functionally, inhibits the supercoiling activity of DNA gyrase. Acts by inhibiting DNA gyrase at an early step, prior to (or at the step of) binding of DNA by the gyrase. It protects cells against toxins that target DNA gyrase, by inhibiting activity of these toxins and reducing the formation of lethal double-strand breaks in the cell. This chain is DNA gyrase inhibitor, found in Citrobacter rodentium (strain ICC168) (Citrobacter freundii biotype 4280).